A 568-amino-acid chain; its full sequence is Serine/threonine-protein kinase RIO1 (568 aa).

2 disordered regions span residues 14–70 (GQFD…DDDW) and 83–109 (YVWN…STPA). 2 positions are modified to phosphoserine: S21 and S22. Over residues 24–38 (SENRDLKTVKEKDDI) the composition is skewed to basic and acidic residues. The span at 51–70 (GEGEIEDEEEEGYDDDDDDW) shows a compositional bias: acidic residues. Residues 87-105 (GGSNPQANRQTSDSSSAKM) are compositionally biased toward polar residues. Residues 180–479 (TEINGCISTG…TGLKKDLSGV (300 aa)) enclose the Protein kinase domain. ATP contacts are provided by K208, S278, and I280. D324 functions as the Proton acceptor in the catalytic mechanism. The Mg(2+) site is built by N329 and D341. D341 (4-aspartylphosphate intermediate) is an active-site residue. A disordered region spans residues 490–568 (VEERTCSDSE…EKTAKTKKGK (79 aa)). Residues 497 to 513 (DSEDIGSSECSDTDSEE) show a composition bias toward acidic residues. Residues 514-543 (QGDHARPKKHTTDPDIDKKERKKMVKEAQR) show a composition bias toward basic and acidic residues. Basic residues predominate over residues 544–568 (EKRKNKIPKHVKKRKEKTAKTKKGK).

Belongs to the protein kinase superfamily. RIO-type Ser/Thr kinase family. Associates with the precursor of the 40S ribosome subunit. Interacts (via its N-terminus) with PRMT5 (via its N-terminus). Interacts with WDR77. Found in a PRMT5 complex composed of PRMT5, WDR77 and RIOK1. Interacts (via its C-terminus) with NCL; this interaction targets NCL for PRTM5 methylation. Mg(2+) serves as cofactor.

Its subcellular location is the cytoplasm. The protein localises to the cytosol. It carries out the reaction L-seryl-[protein] + ATP = O-phospho-L-seryl-[protein] + ADP + H(+). The catalysed reaction is L-threonyl-[protein] + ATP = O-phospho-L-threonyl-[protein] + ADP + H(+). It catalyses the reaction ATP + H2O = ADP + phosphate + H(+). Functionally, involved in the final steps of cytoplasmic maturation of the 40S ribosomal subunit. Involved in processing of 18S-E pre-rRNA to the mature 18S rRNA. Required for the recycling of NOB1 and PNO1 from the late 40S precursor. The association with the very late 40S subunit intermediate may involve a translation-like checkpoint point cycle preceeding the binding to the 60S ribosomal subunit. Despite the protein kinase domain is proposed to act predominantly as an ATPase. The catalytic activity regulates its dynamic association with the 40S subunit. In addition to its role in ribosomal biogenesis acts as an adapter protein by recruiting NCL/nucleolin the to PRMT5 complex for its symmetrical methylation. The sequence is that of Serine/threonine-protein kinase RIO1 from Homo sapiens (Human).